Consider the following 107-residue polypeptide: U1-lycotoxin-Ls1e (107 aa).

An N-terminal signal peptide occupies residues 1 to 20 (MMKVLVVFALLVTLISYSSS). A propeptide spanning residues 21 to 41 (EGIDDLEADELLSLMANEQTR) is cleaved from the precursor. Disulfide bonds link C44–C59, C51–C68, C58–C86, and C70–C84.

The protein belongs to the neurotoxin 19 (CSTX) family. 04 (U1-Lctx) subfamily. Expressed by the venom gland.

The protein localises to the secreted. The protein is U1-lycotoxin-Ls1e of Lycosa singoriensis (Wolf spider).